The sequence spans 436 residues: 3-ketoacyl-CoA thiolase (436 aa).

The Acyl-thioester intermediate role is filled by Cys99. Residues His392 and Cys422 each act as proton acceptor in the active site.

Belongs to the thiolase-like superfamily. Thiolase family. In terms of assembly, heterotetramer of two alpha chains (FadJ) and two beta chains (FadI).

The protein resides in the cytoplasm. The enzyme catalyses an acyl-CoA + acetyl-CoA = a 3-oxoacyl-CoA + CoA. It functions in the pathway lipid metabolism; fatty acid beta-oxidation. Its function is as follows. Catalyzes the final step of fatty acid oxidation in which acetyl-CoA is released and the CoA ester of a fatty acid two carbons shorter is formed. This chain is 3-ketoacyl-CoA thiolase, found in Salmonella choleraesuis (strain SC-B67).